The primary structure comprises 136 residues: Small ribosomal subunit protein uS19 (136 aa).

The disordered stretch occupies residues 114 to 136 (RSRVSHGSAGVGATRSSKFVPLK).

It belongs to the universal ribosomal protein uS19 family.

Protein S19 forms a complex with S13 that binds strongly to the 16S ribosomal RNA. This is Small ribosomal subunit protein uS19 from Methanosarcina barkeri (strain Fusaro / DSM 804).